The chain runs to 892 residues: Transmembrane channel-like protein 2-B (892 aa).

The interval Gly-29 to Ala-125 is disordered. 2 stretches are compositionally biased toward basic residues: residues Arg-48 to Arg-58 and Arg-66 to Asn-77. A compositionally biased stretch (low complexity) spans Pro-103 to Asn-112. The next 9 membrane-spanning stretches (helical) occupy residues Leu-235 to Pro-255, Phe-275 to Tyr-295, Leu-308 to Ile-328, Leu-403 to Val-423, Glu-444 to Ala-464, Ile-482 to Asn-502, Leu-616 to Ile-636, Phe-671 to Ile-691, and Gly-736 to Val-756. Positions Gln-772–Lys-785 are enriched in basic and acidic residues. Disordered regions lie at residues Gln-772 to Val-791 and Glu-796 to Arg-892. A compositionally biased stretch (pro residues) spans Pro-862–Gly-878.

The protein belongs to the TMC family. In adults, expression is restricted to the hair cells of inner ear and lateral line organ. Expressed at higher levels in the larval lateral-line neuromasts than in the larval inner ear.

It localises to the membrane. Probable component of the mechanotransducer (MET) non-selective cation channel. This is Transmembrane channel-like protein 2-B from Danio rerio (Zebrafish).